A 251-amino-acid polypeptide reads, in one-letter code: Coproheme decarboxylase (251 aa).

Fe-coproporphyrin III is bound by residues Arg133, 147–151, His174, Gln187, and Ser225; that span reads YPMSK. Tyr147 is a catalytic residue.

It belongs to the ChdC family. Type 1 subfamily. It depends on Fe-coproporphyrin III as a cofactor.

The enzyme catalyses Fe-coproporphyrin III + 2 H2O2 + 2 H(+) = heme b + 2 CO2 + 4 H2O. The catalysed reaction is Fe-coproporphyrin III + H2O2 + H(+) = harderoheme III + CO2 + 2 H2O. It carries out the reaction harderoheme III + H2O2 + H(+) = heme b + CO2 + 2 H2O. It functions in the pathway porphyrin-containing compound metabolism; protoheme biosynthesis. Its function is as follows. Involved in coproporphyrin-dependent heme b biosynthesis. Catalyzes the decarboxylation of Fe-coproporphyrin III (coproheme) to heme b (protoheme IX), the last step of the pathway. The reaction occurs in a stepwise manner with a three-propionate intermediate. The protein is Coproheme decarboxylase of Listeria welshimeri serovar 6b (strain ATCC 35897 / DSM 20650 / CCUG 15529 / CIP 8149 / NCTC 11857 / SLCC 5334 / V8).